The chain runs to 285 residues: Eukaryotic translation initiation factor 3 subunit J (285 aa).

Disordered stretches follow at residues 1–86 and 232–285; these read MSWD…QLDE and QARL…DDFM. A compositionally biased stretch (acidic residues) spans 22–41; the sequence is WEDEEDDGPVLESWDVDPEE. Positions 36 to 81 form a coiled coil; sequence DVDPEEEEKKKKEAKLQEAKRKAELKAKEDAEKAKKDAKRKELEQF. Over residues 42–86 the composition is skewed to basic and acidic residues; the sequence is EEKKKKEAKLQEAKRKAELKAKEDAEKAKKDAKRKELEQFDQLDE. Residues 269–285 show a composition bias toward acidic residues; sequence DDMDDGQFDDLDDDDFM.

Belongs to the eIF-3 subunit J family. Component of the eukaryotic translation initiation factor 3 (eIF-3) complex.

The protein localises to the cytoplasm. In terms of biological role, component of the eukaryotic translation initiation factor 3 (eIF-3) complex, which is involved in protein synthesis of a specialized repertoire of mRNAs and, together with other initiation factors, stimulates binding of mRNA and methionyl-tRNAi to the 40S ribosome. The eIF-3 complex specifically targets and initiates translation of a subset of mRNAs involved in cell proliferation. The sequence is that of Eukaryotic translation initiation factor 3 subunit J from Candida albicans (strain SC5314 / ATCC MYA-2876) (Yeast).